A 424-amino-acid polypeptide reads, in one-letter code: Glutamate-1-semialdehyde 2,1-aminomutase (424 aa).

Lys-263 is subject to N6-(pyridoxal phosphate)lysine.

The protein belongs to the class-III pyridoxal-phosphate-dependent aminotransferase family. HemL subfamily. In terms of assembly, homodimer. Pyridoxal 5'-phosphate is required as a cofactor.

It localises to the cytoplasm. The catalysed reaction is (S)-4-amino-5-oxopentanoate = 5-aminolevulinate. It participates in porphyrin-containing compound metabolism; protoporphyrin-IX biosynthesis; 5-aminolevulinate from L-glutamyl-tRNA(Glu): step 2/2. This Campylobacter jejuni subsp. doylei (strain ATCC BAA-1458 / RM4099 / 269.97) protein is Glutamate-1-semialdehyde 2,1-aminomutase.